The primary structure comprises 393 residues: Phosphopentomutase (393 aa).

Mn(2+)-binding residues include Asp-15, Asp-288, His-293, Asp-329, His-330, and His-341.

Belongs to the phosphopentomutase family. Mn(2+) is required as a cofactor.

It is found in the cytoplasm. It carries out the reaction 2-deoxy-alpha-D-ribose 1-phosphate = 2-deoxy-D-ribose 5-phosphate. The enzyme catalyses alpha-D-ribose 1-phosphate = D-ribose 5-phosphate. It participates in carbohydrate degradation; 2-deoxy-D-ribose 1-phosphate degradation; D-glyceraldehyde 3-phosphate and acetaldehyde from 2-deoxy-alpha-D-ribose 1-phosphate: step 1/2. Functionally, isomerase that catalyzes the conversion of deoxy-ribose 1-phosphate (dRib-1-P) and ribose 1-phosphate (Rib-1-P) to deoxy-ribose 5-phosphate (dRib-5-P) and ribose 5-phosphate (Rib-5-P), respectively. This is Phosphopentomutase from Halalkalibacterium halodurans (strain ATCC BAA-125 / DSM 18197 / FERM 7344 / JCM 9153 / C-125) (Bacillus halodurans).